A 330-amino-acid polypeptide reads, in one-letter code: Ferredoxin--NADP reductase (330 aa).

Glutamate 35, glutamine 43, tyrosine 48, valine 90, phenylalanine 123, aspartate 285, and threonine 326 together coordinate FAD.

Belongs to the ferredoxin--NADP reductase type 2 family. As to quaternary structure, homodimer. Requires FAD as cofactor.

The enzyme catalyses 2 reduced [2Fe-2S]-[ferredoxin] + NADP(+) + H(+) = 2 oxidized [2Fe-2S]-[ferredoxin] + NADPH. This is Ferredoxin--NADP reductase from Streptococcus pyogenes serotype M1.